Here is a 336-residue protein sequence, read N- to C-terminus: Telomere-binding protein cav (336 aa).

The segment at 107–328 is required for binding to Su(var)205; it reads RKKMVQPYPE…TITFQNSESE (222 aa). Disordered regions lie at residues 137–158 and 199–218; these read RLDR…SPAR and SSDL…SEFQ. Short sequence motifs (su(var)205-binding Pro-containing repeat) lie at residues 225-231 and 289-295; these read PETAINE and PETEMNE. The segment covering 308–327 has biased composition (polar residues); it reads MSIGPSIDSEGTITFQNSES. Residues 308-336 are disordered; that stretch reads MSIGPSIDSEGTITFQNSESEPIDVDSIA.

Interacts (via C-terminus) with Su(var)205 dimer (via hinge and chromoshadow domain) and with moi to form the terminin, telomere-capping, complex. Interacts with HP6, which is also part of the terminin complex.

It localises to the nucleus. The protein localises to the chromosome. It is found in the telomere. Its function is as follows. Binds to chromosome ends in a sequence-dependent manner and is required for telomere capping. This Drosophila sechellia (Fruit fly) protein is Telomere-binding protein cav.